The sequence spans 212 residues: HTH-type transcriptional repressor NicS (212 aa).

Positions 14–74 constitute an HTH tetR-type domain; that stretch reads DRTRDNILKA…SVLEHIYASF (61 aa). A DNA-binding region (H-T-H motif) is located at residues 37–56; sequence RIEQISTLAKSNDRMIYYYF.

It participates in cofactor degradation; nicotinate degradation [regulation]. Functionally, transcriptional repressor for the nicAB operon, encoding the upper aerobic nicotinate degradation pathway. Acts under non-induced conditions: repression of the nicAB operon becomes alleviated in presence of either nicotinate or 6-hydroxynicotinate (6HNA). In Pseudomonas putida (strain ATCC 47054 / DSM 6125 / CFBP 8728 / NCIMB 11950 / KT2440), this protein is HTH-type transcriptional repressor NicS (nicS).